The sequence spans 229 residues: Cytidylate kinase (229 aa).

Residue 12–20 (GPSGSGKGT) participates in ATP binding.

This sequence belongs to the cytidylate kinase family. Type 1 subfamily.

The protein resides in the cytoplasm. It catalyses the reaction CMP + ATP = CDP + ADP. The catalysed reaction is dCMP + ATP = dCDP + ADP. This chain is Cytidylate kinase, found in Pseudomonas syringae pv. tomato (strain ATCC BAA-871 / DC3000).